Reading from the N-terminus, the 159-residue chain is Eukaryotic translation initiation factor 5A-3 (159 aa).

The segment covering 1–12 has biased composition (basic and acidic residues); it reads MSDEEHQFESKA. A disordered region spans residues 1–21; sequence MSDEEHQFESKADAGASKTYP. Lys-52 is modified (hypusine).

It belongs to the eIF-5A family. Lys-52 undergoes hypusination, a unique post-translational modification that consists in the addition of a butylamino group from spermidine to lysine side chain, leading to the formation of the unusual amino acid hypusine. eIF-5As are the only known proteins to undergo this modification, which is essential for their function.

Its function is as follows. Translation factor that promotes translation elongation and termination, particularly upon ribosome stalling at specific amino acid sequence contexts. Binds between the exit (E) and peptidyl (P) site of the ribosome and promotes rescue of stalled ribosome: specifically required for efficient translation of polyproline-containing peptides as well as other motifs that stall the ribosome. Acts as a ribosome quality control (RQC) cofactor by joining the RQC complex to facilitate peptidyl transfer during CAT tailing step. This Solanum lycopersicum (Tomato) protein is Eukaryotic translation initiation factor 5A-3.